The following is a 427-amino-acid chain: Serine--tRNA ligase (427 aa).

231–233 (TAE) serves as a coordination point for L-serine. Residue 262-264 (RSE) coordinates ATP. An L-serine-binding site is contributed by E285. Residue 349–352 (EISS) participates in ATP binding. S385 is an L-serine binding site.

The protein belongs to the class-II aminoacyl-tRNA synthetase family. Type-1 seryl-tRNA synthetase subfamily. Homodimer. The tRNA molecule binds across the dimer.

The protein localises to the cytoplasm. The catalysed reaction is tRNA(Ser) + L-serine + ATP = L-seryl-tRNA(Ser) + AMP + diphosphate + H(+). The enzyme catalyses tRNA(Sec) + L-serine + ATP = L-seryl-tRNA(Sec) + AMP + diphosphate + H(+). The protein operates within aminoacyl-tRNA biosynthesis; selenocysteinyl-tRNA(Sec) biosynthesis; L-seryl-tRNA(Sec) from L-serine and tRNA(Sec): step 1/1. Functionally, catalyzes the attachment of serine to tRNA(Ser). Is also able to aminoacylate tRNA(Sec) with serine, to form the misacylated tRNA L-seryl-tRNA(Sec), which will be further converted into selenocysteinyl-tRNA(Sec). The sequence is that of Serine--tRNA ligase from Staphylococcus saprophyticus subsp. saprophyticus (strain ATCC 15305 / DSM 20229 / NCIMB 8711 / NCTC 7292 / S-41).